Here is a 425-residue protein sequence, read N- to C-terminus: Serine--tRNA ligase (425 aa).

231–233 serves as a coordination point for L-serine; sequence TAE. 262–264 provides a ligand contact to ATP; sequence RSE. Glu285 provides a ligand contact to L-serine. 349 to 352 contributes to the ATP binding site; sequence EISS. An L-serine-binding site is contributed by Ser385.

The protein belongs to the class-II aminoacyl-tRNA synthetase family. Type-1 seryl-tRNA synthetase subfamily. Homodimer. The tRNA molecule binds across the dimer.

It is found in the cytoplasm. The catalysed reaction is tRNA(Ser) + L-serine + ATP = L-seryl-tRNA(Ser) + AMP + diphosphate + H(+). The enzyme catalyses tRNA(Sec) + L-serine + ATP = L-seryl-tRNA(Sec) + AMP + diphosphate + H(+). It functions in the pathway aminoacyl-tRNA biosynthesis; selenocysteinyl-tRNA(Sec) biosynthesis; L-seryl-tRNA(Sec) from L-serine and tRNA(Sec): step 1/1. Its function is as follows. Catalyzes the attachment of serine to tRNA(Ser). Is also able to aminoacylate tRNA(Sec) with serine, to form the misacylated tRNA L-seryl-tRNA(Sec), which will be further converted into selenocysteinyl-tRNA(Sec). This is Serine--tRNA ligase from Bartonella quintana (strain Toulouse) (Rochalimaea quintana).